A 633-amino-acid polypeptide reads, in one-letter code: uncharacterized protein (633 aa).

This is an uncharacterized protein from Acanthamoeba polyphaga mimivirus (APMV).